The sequence spans 878 residues: Valine--tRNA ligase (878 aa).

Residues 43–53 (PYPTGRLHLGH) carry the 'HIGH' region motif. The 'KMSKS' region motif lies at 527-531 (KMSKS). Lysine 530 is an ATP binding site.

Belongs to the class-I aminoacyl-tRNA synthetase family. ValS type 2 subfamily.

It is found in the cytoplasm. It carries out the reaction tRNA(Val) + L-valine + ATP = L-valyl-tRNA(Val) + AMP + diphosphate. Its function is as follows. Catalyzes the attachment of valine to tRNA(Val). As ValRS can inadvertently accommodate and process structurally similar amino acids such as threonine, to avoid such errors, it has a 'posttransfer' editing activity that hydrolyzes mischarged Thr-tRNA(Val) in a tRNA-dependent manner. In Methanocaldococcus jannaschii (strain ATCC 43067 / DSM 2661 / JAL-1 / JCM 10045 / NBRC 100440) (Methanococcus jannaschii), this protein is Valine--tRNA ligase.